The sequence spans 136 residues: MTKLTFGALVALAMTAAASTAMSSKAMAQDAAAGKTSFNKCLACHAIGEGAKNKVGPELNGLNGRKSGTAPDYSYSDANKNSGITWDEATFKEYIKDPKAKIPGTKMAFAGIKNETEINNLWTFVSQFDKDGKIKQ.

Residues 1–28 (MTKLTFGALVALAMTAAASTAMSSKAMA) form the signal peptide. Heme c contacts are provided by C41, C44, H45, and M107.

Binds 1 heme c group covalently per subunit. Post-translationally, the N-terminus is blocked.

The protein resides in the periplasm. Plays a role in bacteroid respiration under conditions of oxygen limitation. Required for electron-transfer during denitrification. This Bradyrhizobium diazoefficiens (strain JCM 10833 / BCRC 13528 / IAM 13628 / NBRC 14792 / USDA 110) protein is Cytochrome c-550 (cycA).